Consider the following 506-residue polypeptide: Kynurenine 3-monooxygenase (506 aa).

Residues 153-175 (QETSLLPGEESEKDKKQNTEDED) form a disordered region. A compositionally biased stretch (basic and acidic residues) spans 162–171 (ESEKDKKQNT).

The protein belongs to the aromatic-ring hydroxylase family. KMO subfamily. Requires FAD as cofactor.

The protein resides in the mitochondrion outer membrane. The catalysed reaction is L-kynurenine + NADPH + O2 + H(+) = 3-hydroxy-L-kynurenine + NADP(+) + H2O. The protein operates within cofactor biosynthesis; NAD(+) biosynthesis; quinolinate from L-kynurenine: step 1/3. Functionally, catalyzes the hydroxylation of L-kynurenine (L-Kyn) to form 3-hydroxy-L-kynurenine (L-3OHKyn). Required for synthesis of quinolinic acid. The protein is Kynurenine 3-monooxygenase of Cryptococcus neoformans var. neoformans serotype D (strain B-3501A) (Filobasidiella neoformans).